A 182-amino-acid chain; its full sequence is Signal peptidase I (182 aa).

The Cytoplasmic portion of the chain corresponds to 1 to 13; that stretch reads MTKQKEKRGRRWP. Residues 14-30 form a helical membrane-spanning segment; it reads WFVAVCVVATLRLFVFS. Residues 31-182 are Extracellular-facing; that stretch reads NYVVEGKSMM…WPFKQFAFQF (152 aa). Catalysis depends on residues serine 38 and lysine 79.

Belongs to the peptidase S26 family.

Its subcellular location is the cell membrane. It catalyses the reaction Cleavage of hydrophobic, N-terminal signal or leader sequences from secreted and periplasmic proteins.. This Bacillus caldolyticus protein is Signal peptidase I (lepB).